We begin with the raw amino-acid sequence, 233 residues long: Delta-actitoxin-Amc1a (233 aa).

The signal sequence occupies residues 1–18; the sequence is MKRIFIVALLFATCLVNA. 2 propeptides span residues 19-29 and 30-33; these read KPSINDADIKR and EPEP. A Hydroxyproline modification is found at Pro-39. Disulfide bonds link Cys-40–Cys-51 and Cys-43–Cys-58. Propeptides lie at residues 61–63 and 64–67; these read RKR and EPEP. Pro-73 carries the hydroxyproline modification. Disulfide bonds link Cys-74–Cys-85 and Cys-77–Cys-92. Propeptides lie at residues 95-97 and 98-101; these read RKR and EPEP. Pro-107 carries the post-translational modification Hydroxyproline. Intrachain disulfides connect Cys-108/Cys-119 and Cys-111/Cys-126. Propeptides lie at residues 129-131 and 132-135; these read RKR and EPEP. Pro-141 is modified (hydroxyproline). Disulfide bonds link Cys-142/Cys-153 and Cys-145/Cys-160. 2 propeptides span residues 163–165 and 166–169; these read RKR and EPEP. Pro-175 is modified (hydroxyproline). Disulfide bonds link Cys-176–Cys-187 and Cys-179–Cys-194. 2 propeptides span residues 197–199 and 200–203; these read RKR and EPEP. At Pro-209 the chain carries Hydroxyproline. Cystine bridges form between Cys-210–Cys-221 and Cys-213–Cys-228. Positions 231–233 are excised as a propeptide; that stretch reads RKR.

Belongs to the sea anemone BBH family. Each Am I peptide may contain 2 disulfide bonds. Post-translationally, the precursor protein seems to be processed in the following sequence: release of the signal peptide and of the propeptide, production of six identical 34-residue peptides by cleavage between Arg and Glu, release of four N-terminal and three C-terminal residues from each peptide and hydroxylation of each Pro in position 6 of the resulting 27-residue peptides.

Its subcellular location is the secreted. It is found in the nematocyst. May inhibit voltage-gated sodium channels (Nav). The polypeptide is Delta-actitoxin-Amc1a (Antheopsis maculata (Sea anemone)).